The sequence spans 727 residues: Alpha-1,3-galactosidase A (727 aa).

The disordered stretch occupies residues 220–241 (ATNRTWRTSNPVFPERHEDHRP). Positions 221–230 (TNRTWRTSNP) are enriched in polar residues. PbH1 repeat units lie at residues 336-358 (KGTV…NIHG), 461-483 (TPTV…LVTT), 484-506 (RRPV…YISS), 517-538 (VRNV…IFFD), 551-572 (HRNV…LSGR), and 574-603 (VGGL…RVGD).

The protein belongs to the glycosyl hydrolase 110 family. A subfamily.

It catalyses the reaction Hydrolysis of terminal, non-reducing branched (1-&gt;3)-alpha-D-galactosidic residues, producing free D-galactose.. It carries out the reaction Hydrolysis of terminal, non-reducing alpha-D-galactose residues in alpha-D-galactosides, including galactose oligosaccharides, galactomannans and galactolipids.. Its function is as follows. Alpha-galactosidase that specifically removes branched alpha-1,3-linked galactose residues present in blood group B antigens. Has no activity toward linear alpha-1,3-linked galactose residues. The protein is Alpha-1,3-galactosidase A (glaA) of Peterkaempfera griseoplana (Streptacidiphilus griseoplanus).